The chain runs to 629 residues: tRNA uridine 5-carboxymethylaminomethyl modification enzyme MnmG (629 aa).

An FAD-binding site is contributed by Gly14 to Gly19. Position 274–288 (Gly274–Phe288) interacts with NAD(+).

Belongs to the MnmG family. As to quaternary structure, homodimer. Heterotetramer of two MnmE and two MnmG subunits. FAD is required as a cofactor.

It is found in the cytoplasm. Functionally, NAD-binding protein involved in the addition of a carboxymethylaminomethyl (cmnm) group at the wobble position (U34) of certain tRNAs, forming tRNA-cmnm(5)s(2)U34. This Xylella fastidiosa (strain Temecula1 / ATCC 700964) protein is tRNA uridine 5-carboxymethylaminomethyl modification enzyme MnmG.